The sequence spans 295 residues: Putative fused nickel transport protein NikMN (295 aa).

8 consecutive transmembrane segments (helical) span residues 8–28, 39–59, 70–90, 98–118, 135–155, 175–195, 211–231, and 268–288; these read LDLS…GYSI, LFGI…PIPG, LAGI…VLTI, GGIT…VFVG, FIAG…EIGI, ALLG…IAAA, LAVI…AELV, and AGTL…GFAL.

The protein belongs to the CbiM family. NikM subfamily.

The protein resides in the cell membrane. May be involved in nickel transport. The polypeptide is Putative fused nickel transport protein NikMN (Archaeoglobus fulgidus (strain ATCC 49558 / DSM 4304 / JCM 9628 / NBRC 100126 / VC-16)).